The sequence spans 345 residues: Adenosine kinase 2 (345 aa).

Residue Asp300 is part of the active site.

Belongs to the carbohydrate kinase PfkB family. As to quaternary structure, interacts with the begomovirus AL2 protein and the curtovirus L2 protein. Interacts with KIN11. The cofactor is Mg(2+). In terms of processing, phosphorylated by KIN11. As to expression, widely expressed.

The protein resides in the cytoplasm. It catalyses the reaction adenosine + ATP = AMP + ADP + H(+). It functions in the pathway purine metabolism; AMP biosynthesis via salvage pathway; AMP from adenosine: step 1/1. Its activity is regulated as follows. Inactivated by the begomovirus AL2 protein or the curtovirus L2 protein. Functionally, ATP dependent phosphorylation of adenosine and other related nucleoside analogs to monophosphate derivatives. Essential to sustain methyl recycling. The chain is Adenosine kinase 2 from Arabidopsis thaliana (Mouse-ear cress).